Consider the following 221-residue polypeptide: Protein OPG170 (221 aa).

Positions 1–17 (MYLLFIILMYLLPFSFQ) are cleaved as a signal peptide. An N-linked (GlcNAc...) asparagine; by host glycan is attached at asparagine 72.

It belongs to the orthopoxvirus OPG170 family.

Its subcellular location is the secreted. In terms of biological role, may interact with several cellular chemokines to interfere with chemokine-glycosaminoglycan (GAG) interactions at the cell surface to alter chemotaxis of nearby responsive cells. This chain is Protein OPG170 (OPG170), found in Monkeypox virus.